Here is a 566-residue protein sequence, read N- to C-terminus: 15-cis-phytoene desaturase, chloroplastic/chromoplastic (566 aa).

Residues 1 to 86 constitute a chloroplast and chromoplast transit peptide; sequence MVVFGNVSAA…ASLSASFRSA (86 aa). Residues Ala-103, 122–123, Lys-130, 147–148, and Tyr-153 each bind FAD; these read EA and HI. Arg-288 contributes to the substrate binding site. FAD contacts are provided by Ile-330 and Asp-519. Substrate is bound at residue Ala-527. Met-529 lines the FAD pocket.

This sequence belongs to the carotenoid/retinoid oxidoreductase family. In terms of assembly, homotetramer. FAD serves as cofactor.

It localises to the plastid. Its subcellular location is the chloroplast. The protein localises to the chromoplast. It is found in the membrane. The enzyme catalyses 2 a plastoquinone + 15-cis-phytoene = 9,9',15-tri-cis-zeta-carotene + 2 a plastoquinol. Its pathway is carotenoid biosynthesis; lycopene biosynthesis. Converts phytoene into zeta-carotene via the intermediary of phytofluene by the symmetrical introduction of two double bonds at the C-11 and C-11' positions of phytoene with a concomitant isomerization of two neighboring double bonds at the C9 and C9' positions from trans to cis. This is 15-cis-phytoene desaturase, chloroplastic/chromoplastic (PDS) from Arabidopsis thaliana (Mouse-ear cress).